Consider the following 595-residue polypeptide: Quinoprotein alcohol dehydrogenase PedH (595 aa).

The N-terminal stretch at 1-27 (MTRSPRRPLFAVSLVLSAMLLAGAAHA) is a signal peptide. Gln-87 is a binding site for pyrroloquinoline quinone. A disulfide bond links Cys-131 and Cys-132. Residues Arg-137, Ser-181, Gly-197, and Gly-198 each coordinate pyrroloquinoline quinone. Pr(3+) is bound at residue Glu-199. Residue Trp-263 coordinates pyrroloquinoline quinone. Residues Asn-281, Asp-323, and Asp-325 each coordinate Pr(3+). Asp-323 functions as the Proton acceptor in the catalytic mechanism. Positions 350, 417, 493, and 557 each coordinate pyrroloquinoline quinone.

This sequence belongs to the bacterial PQQ dehydrogenase family. Pr(3+) serves as cofactor. Nd(3+) is required as a cofactor. The cofactor is La(3+). It depends on Ce(3+) as a cofactor. Requires Sm(3+) as cofactor. Pyrroloquinoline quinone serves as cofactor. Post-translationally, the disulfide ring formed between the two adjacent cysteine residues Cys-131 and Cys-132 is essential for efficient electron transfer at pH 7 from PedH to its natural electron acceptor cytochrome c550.

It localises to the periplasm. It catalyses the reaction a primary alcohol + 2 Fe(III)-[cytochrome c] = an aldehyde + 2 Fe(II)-[cytochrome c] + 2 H(+). The catalysed reaction is ethanol + 2 Fe(III)-[cytochrome c] = acetaldehyde + 2 Fe(II)-[cytochrome c] + 2 H(+). It carries out the reaction butan-1-ol + 2 Fe(III)-[cytochrome c] = butanal + 2 Fe(II)-[cytochrome c] + 2 H(+). The enzyme catalyses butan-2-ol + 2 Fe(III)-[cytochrome c] = butan-2-one + 2 Fe(II)-[cytochrome c] + 2 H(+). It catalyses the reaction 2-phenylethanol + 2 Fe(III)-[cytochrome c] = 2-phenylacetaldehyde + 2 Fe(II)-[cytochrome c] + 2 H(+). The catalysed reaction is octan-1-ol + 2 Fe(III)-[cytochrome c] = octanal + 2 Fe(II)-[cytochrome c] + 2 H(+). It carries out the reaction hexan-1-ol + 2 Fe(III)-[cytochrome c] = hexanal + 2 Fe(II)-[cytochrome c] + 2 H(+). The enzyme catalyses cinnamyl alcohol + 2 Fe(III)-[cytochrome c] = cinnamaldehyde + 2 Fe(II)-[cytochrome c] + 2 H(+). It catalyses the reaction farnesol + 2 Fe(III)-[cytochrome c] = farnesal + 2 Fe(II)-[cytochrome c] + 2 H(+). The catalysed reaction is an aldehyde + 2 Fe(III)-[cytochrome c] + H2O = a carboxylate + 2 Fe(II)-[cytochrome c] + 3 H(+). It carries out the reaction acetaldehyde + 2 Fe(III)-[cytochrome c] + H2O = 2 Fe(II)-[cytochrome c] + acetate + 3 H(+). The enzyme catalyses butanal + 2 Fe(III)-[cytochrome c] + H2O = butanoate + 2 Fe(II)-[cytochrome c] + 3 H(+). It catalyses the reaction hexanal + 2 Fe(III)-[cytochrome c] + H2O = hexanoate + 2 Fe(II)-[cytochrome c] + 3 H(+). The catalysed reaction is octanal + 2 Fe(III)-[cytochrome c] + H2O = octanoate + 2 Fe(II)-[cytochrome c] + 3 H(+). Alcohol dehydrogenase that catalyzes the oxidation of a range of substrates, including linear and aromatic primary and secondary alcohols, as well as aldehydes, but only in the presence of lanthanides, allowing bacterial growth with a variety of volatile organic compounds (VOCs) as carbon and energy sources. Is also involved in the transcriptional regulation of pedE and pedH, most likely acting as a lanthanide sensory module. Uses a specific inducible cytochrome c550, encoded by the adjacent gene in the locus, as electron acceptor. The chain is Quinoprotein alcohol dehydrogenase PedH from Pseudomonas putida (strain ATCC 47054 / DSM 6125 / CFBP 8728 / NCIMB 11950 / KT2440).